The sequence spans 1009 residues: Cilia- and flagella-associated protein 70 (1009 aa).

Positions 410 to 428 (NLKEDKPVKEKDIDGRPRP) are enriched in basic and acidic residues. Residues 410–457 (NLKEDKPVKEKDIDGRPRPGDVQAPSIKSQSSDTPLEGEPPLSHNPEG) are disordered. TPR repeat units follow at residues 498–531 (PPLT…EYYR), 635–668 (SEQL…EPQN), 669–702 (LDHW…NQSH), 704–736 (HSLL…EPTN), 888–921 (HFIF…SPSC), 923–954 (TWLG…NNYN), and 956–988 (EVWA…KLKD).

It belongs to the CFAP70 family.

It is found in the cell projection. The protein resides in the cilium. The protein localises to the flagellum. It localises to the cytoplasm. Its subcellular location is the cytoskeleton. It is found in the flagellum basal body. The protein resides in the cilium axoneme. Axoneme-binding protein that plays a role in the regulation of ciliary motility and cilium length. This chain is Cilia- and flagella-associated protein 70, found in Macaca fascicularis (Crab-eating macaque).